A 428-amino-acid chain; its full sequence is Enolase (428 aa).

Residue Q164 coordinates (2R)-2-phosphoglycerate. E208 functions as the Proton donor in the catalytic mechanism. Mg(2+) contacts are provided by D245, E286, and D313. 4 residues coordinate (2R)-2-phosphoglycerate: K338, R367, S368, and K389. The active-site Proton acceptor is K338.

Belongs to the enolase family. Requires Mg(2+) as cofactor.

The protein localises to the cytoplasm. The protein resides in the secreted. Its subcellular location is the cell surface. The catalysed reaction is (2R)-2-phosphoglycerate = phosphoenolpyruvate + H2O. Its pathway is carbohydrate degradation; glycolysis; pyruvate from D-glyceraldehyde 3-phosphate: step 4/5. Functionally, catalyzes the reversible conversion of 2-phosphoglycerate (2-PG) into phosphoenolpyruvate (PEP). It is essential for the degradation of carbohydrates via glycolysis. This chain is Enolase, found in Pyrococcus abyssi (strain GE5 / Orsay).